The chain runs to 380 residues: 1-deoxy-D-xylulose 5-phosphate reductoisomerase (380 aa).

NADPH is bound by residues serine 10, glycine 11, serine 12, isoleucine 13, glycine 36, lysine 37, asparagine 38, and asparagine 120. Position 121 (lysine 121) interacts with 1-deoxy-D-xylulose 5-phosphate. An NADPH-binding site is contributed by glutamate 122. Aspartate 146 is a binding site for Mn(2+). The 1-deoxy-D-xylulose 5-phosphate site is built by serine 147, glutamate 148, serine 172, and histidine 195. Glutamate 148 contacts Mn(2+). Glycine 201 provides a ligand contact to NADPH. 1-deoxy-D-xylulose 5-phosphate contacts are provided by serine 208, asparagine 213, lysine 214, and glutamate 217. Glutamate 217 lines the Mn(2+) pocket.

It belongs to the DXR family. Mg(2+) is required as a cofactor. The cofactor is Mn(2+).

The enzyme catalyses 2-C-methyl-D-erythritol 4-phosphate + NADP(+) = 1-deoxy-D-xylulose 5-phosphate + NADPH + H(+). Its pathway is isoprenoid biosynthesis; isopentenyl diphosphate biosynthesis via DXP pathway; isopentenyl diphosphate from 1-deoxy-D-xylulose 5-phosphate: step 1/6. In terms of biological role, catalyzes the NADPH-dependent rearrangement and reduction of 1-deoxy-D-xylulose-5-phosphate (DXP) to 2-C-methyl-D-erythritol 4-phosphate (MEP). The protein is 1-deoxy-D-xylulose 5-phosphate reductoisomerase of Bacillus cereus (strain Q1).